The primary structure comprises 145 residues: D-aminoacyl-tRNA deacylase (145 aa).

Positions 137-138 (GP) match the Gly-cisPro motif, important for rejection of L-amino acids motif.

The protein belongs to the DTD family. Homodimer.

The protein localises to the cytoplasm. The catalysed reaction is glycyl-tRNA(Ala) + H2O = tRNA(Ala) + glycine + H(+). The enzyme catalyses a D-aminoacyl-tRNA + H2O = a tRNA + a D-alpha-amino acid + H(+). Its function is as follows. An aminoacyl-tRNA editing enzyme that deacylates mischarged D-aminoacyl-tRNAs. Also deacylates mischarged glycyl-tRNA(Ala), protecting cells against glycine mischarging by AlaRS. Acts via tRNA-based rather than protein-based catalysis; rejects L-amino acids rather than detecting D-amino acids in the active site. By recycling D-aminoacyl-tRNA to D-amino acids and free tRNA molecules, this enzyme counteracts the toxicity associated with the formation of D-aminoacyl-tRNA entities in vivo and helps enforce protein L-homochirality. The chain is D-aminoacyl-tRNA deacylase from Pseudomonas aeruginosa (strain LESB58).